The primary structure comprises 296 residues: MNDILSIAPRDKAEILAQALPYIRKFHGKTMVIKYGGNAMTDPALQADFAEDVVLLKLVGMNPVVVHGGGPQIETALNRLGKKGEFIQGMRVTDAETMEVVEWVLAGEVQQDIVGLIHQAGGKAVGLTGRDGGLIRARKLKMVDNKDPNIEYDVGQVGDIVSIDPSVVRALQDDAFIPVISPIGFGEENESYNINADVVASKLATVLQAEKLVLLTNTPGVLDKAGSLLTDLTAREIDALFADGTISGGMLPKISGALDAAKAGVNAVHIIDGRVPHAMLLEILTDQAYGTMIRSH.

Residues 69-70 (GG), R91, and N193 each bind substrate.

The protein belongs to the acetylglutamate kinase family. ArgB subfamily.

It localises to the cytoplasm. It catalyses the reaction N-acetyl-L-glutamate + ATP = N-acetyl-L-glutamyl 5-phosphate + ADP. It functions in the pathway amino-acid biosynthesis; L-arginine biosynthesis; N(2)-acetyl-L-ornithine from L-glutamate: step 2/4. Catalyzes the ATP-dependent phosphorylation of N-acetyl-L-glutamate. This Delftia acidovorans (strain DSM 14801 / SPH-1) protein is Acetylglutamate kinase.